Here is a 423-residue protein sequence, read N- to C-terminus: UPF0229 protein PLES_05841 (423 aa).

The interval 84–107 (AGEHIARPSGGGGGRGGGKASNSG) is disordered. Positions 92–102 (SGGGGGRGGGK) are enriched in gly residues.

It belongs to the UPF0229 family.

The protein is UPF0229 protein PLES_05841 of Pseudomonas aeruginosa (strain LESB58).